The following is a 226-amino-acid chain: MPIEDRDNAYLITHALAKDTLSQLRDIETEQVAFRKGLVKLGRICGYEIIDGAMETEYAHVQTPLTETTGEQVSGLDNIVIVNVLRAATPFVEGLLKAFPRAKQGVISAGRDEAAGMNQDGMFPITIDYVKLPEITANDTVVVADPMLATGSTMCAVLDHVNDAAKSKPKNLFVLSAVSAPEGLLHVGSEFSSADLLTVAIDDYLDDEGYIVPGLGDAGDRAFRTV.

36–40 (KGLVK) lines the GTP pocket. Residues R86, R111, and 145-153 (DPMLATGST) contribute to the 5-phospho-alpha-D-ribose 1-diphosphate site. Uracil-binding positions include I211 and 216-218 (GDA). D217 lines the 5-phospho-alpha-D-ribose 1-diphosphate pocket.

It belongs to the UPRTase family. Mg(2+) serves as cofactor.

It catalyses the reaction UMP + diphosphate = 5-phospho-alpha-D-ribose 1-diphosphate + uracil. The protein operates within pyrimidine metabolism; UMP biosynthesis via salvage pathway; UMP from uracil: step 1/1. With respect to regulation, allosterically activated by GTP. Functionally, catalyzes the conversion of uracil and 5-phospho-alpha-D-ribose 1-diphosphate (PRPP) to UMP and diphosphate. The sequence is that of Uracil phosphoribosyltransferase from Haloquadratum walsbyi (strain DSM 16790 / HBSQ001).